Consider the following 820-residue polypeptide: Leucine--tRNA ligase (820 aa).

Residues 40 to 51 (PYPSGAGLHVGH) carry the 'HIGH' region motif. Residues 601-605 (KMSKS) carry the 'KMSKS' region motif. Lysine 604 lines the ATP pocket.

This sequence belongs to the class-I aminoacyl-tRNA synthetase family.

It localises to the cytoplasm. The enzyme catalyses tRNA(Leu) + L-leucine + ATP = L-leucyl-tRNA(Leu) + AMP + diphosphate. The sequence is that of Leucine--tRNA ligase from Chlamydia felis (strain Fe/C-56) (Chlamydophila felis).